The chain runs to 188 residues: Elongation factor P (188 aa).

An N6-(3,6-diaminohexanoyl)-5-hydroxylysine modification is found at Lys34.

This sequence belongs to the elongation factor P family. Post-translationally, may be beta-lysylated on the epsilon-amino group of Lys-34 by the combined action of EpmA and EpmB, and then hydroxylated on the C5 position of the same residue by EpmC (if this protein is present). Lysylation is critical for the stimulatory effect of EF-P on peptide-bond formation. The lysylation moiety may extend toward the peptidyltransferase center and stabilize the terminal 3-CCA end of the tRNA. Hydroxylation of the C5 position on Lys-34 may allow additional potential stabilizing hydrogen-bond interactions with the P-tRNA.

Its subcellular location is the cytoplasm. It participates in protein biosynthesis; polypeptide chain elongation. Its function is as follows. Involved in peptide bond synthesis. Alleviates ribosome stalling that occurs when 3 or more consecutive Pro residues or the sequence PPG is present in a protein, possibly by augmenting the peptidyl transferase activity of the ribosome. Modification of Lys-34 is required for alleviation. This is Elongation factor P from Vibrio campbellii (strain ATCC BAA-1116).